A 101-amino-acid chain; its full sequence is NADH-quinone oxidoreductase subunit K (101 aa).

Helical transmembrane passes span 4–24 (LTHYLVLAAVMFAISVLGIFL), 30–50 (IVLLMAIELMLLAVNFNFIAF), and 61–81 (IFVFFVLTVAAAESAIGLAIL).

It belongs to the complex I subunit 4L family. NDH-1 is composed of 14 different subunits. Subunits NuoA, H, J, K, L, M, N constitute the membrane sector of the complex.

It is found in the cell inner membrane. It carries out the reaction a quinone + NADH + 5 H(+)(in) = a quinol + NAD(+) + 4 H(+)(out). NDH-1 shuttles electrons from NADH, via FMN and iron-sulfur (Fe-S) centers, to quinones in the respiratory chain. The immediate electron acceptor for the enzyme in this species is believed to be ubiquinone. Couples the redox reaction to proton translocation (for every two electrons transferred, four hydrogen ions are translocated across the cytoplasmic membrane), and thus conserves the redox energy in a proton gradient. The chain is NADH-quinone oxidoreductase subunit K from Laribacter hongkongensis (strain HLHK9).